Here is a 299-residue protein sequence, read N- to C-terminus: Protoheme IX farnesyltransferase (299 aa).

Transmembrane regions (helical) follow at residues 25-45 (VVVLMLITSLVGMFLASRAGV), 47-67 (WTVLLFGNLGIGLCAGAAAAV), 95-115 (LAALGFALALAVAGMALLLTF), 119-139 (LAAWLTLASLLGYAVLYTGFL), 147-167 (IVIGGLAGAAPPLLGWVAVSG), 173-193 (PLLLVLIVFTWTPPHFWALAI), 218-238 (LHILLYTLALLAVTLLPYAIH), 243-263 (LYLLCALLLGGRFLHWAWALY), and 279-299 (IRYLFLLFIALLVDHYLPLTL).

The protein belongs to the UbiA prenyltransferase family. Protoheme IX farnesyltransferase subfamily.

It is found in the cell inner membrane. The catalysed reaction is heme b + (2E,6E)-farnesyl diphosphate + H2O = Fe(II)-heme o + diphosphate. It participates in porphyrin-containing compound metabolism; heme O biosynthesis; heme O from protoheme: step 1/1. In terms of biological role, converts heme B (protoheme IX) to heme O by substitution of the vinyl group on carbon 2 of heme B porphyrin ring with a hydroxyethyl farnesyl side group. The chain is Protoheme IX farnesyltransferase from Azotobacter vinelandii (strain DJ / ATCC BAA-1303).